The chain runs to 136 residues: Small ribosomal subunit protein uS9 (136 aa).

It belongs to the universal ribosomal protein uS9 family.

This chain is Small ribosomal subunit protein uS9, found in Synechococcus sp. (strain JA-2-3B'a(2-13)) (Cyanobacteria bacterium Yellowstone B-Prime).